Here is a 469-residue protein sequence, read N- to C-terminus: Glutamate--tRNA ligase (469 aa).

The 'HIGH' region motif lies at P11–N21. The span at A116–P131 shows a compositional bias: basic and acidic residues. Positions A116–P139 are disordered. Positions K243–R247 match the 'KMSKS' region motif. An ATP-binding site is contributed by K246.

This sequence belongs to the class-I aminoacyl-tRNA synthetase family. Glutamate--tRNA ligase type 1 subfamily. Monomer.

The protein localises to the cytoplasm. The catalysed reaction is tRNA(Glu) + L-glutamate + ATP = L-glutamyl-tRNA(Glu) + AMP + diphosphate. Functionally, catalyzes the attachment of glutamate to tRNA(Glu) in a two-step reaction: glutamate is first activated by ATP to form Glu-AMP and then transferred to the acceptor end of tRNA(Glu). This is Glutamate--tRNA ligase from Paraburkholderia phymatum (strain DSM 17167 / CIP 108236 / LMG 21445 / STM815) (Burkholderia phymatum).